Consider the following 65-residue polypeptide: Large ribosomal subunit protein bL35 (65 aa).

2 stretches are compositionally biased toward basic residues: residues 1–15 (MPKMKTKKSASKRFT) and 26–44 (QAFKRHILTKKTTKNKRQL). A disordered region spans residues 1-65 (MPKMKTKKSA…KSVRAMMPYA (65 aa)).

It belongs to the bacterial ribosomal protein bL35 family.

The sequence is that of Large ribosomal subunit protein bL35 from Cupriavidus metallidurans (strain ATCC 43123 / DSM 2839 / NBRC 102507 / CH34) (Ralstonia metallidurans).